A 1150-amino-acid polypeptide reads, in one-letter code: Voltage-dependent calcium channel subunit alpha-2/delta-2 (1150 aa).

A signal peptide spans 1 to 18 (MAVPARTCGASRPGPART). Residues 1–41 (MAVPARTCGASRPGPARTARPWPGCGPHPGPGTRRPTSGPP) are disordered. The Extracellular segment spans residues 19–1113 (ARPWPGCGPH…TEDTSDCGRG (1095 aa)). Residues 291-469 (DMVIIVDVSG…INTQEYLDVL (179 aa)) form the VWFA domain. Residues Asp297, Ser299, and Ser301 each coordinate a divalent metal cation. Residues 297 to 301 (DVSGS) carry the MIDAS-like motif motif. 6 N-linked (GlcNAc...) asparagine glycosylation sites follow: Asn386, Asn418, Asn507, Asn540, Asn624, and Asn861. A disulfide bridge links Cys443 with Cys1098. Residues 485–574 (WTNVYEDALG…KPQTTNFREP (90 aa)) enclose the Cache domain. A helical transmembrane segment spans residues 1114–1134 (ASFPPSLGVLVSLQLLLLLGL). The Cytoplasmic segment spans residues 1135 to 1150 (PPRPQPQVLVHASRRL).

It belongs to the calcium channel subunit alpha-2/delta family. In terms of assembly, dimer formed of alpha-2-2 and delta-2 chains; disulfide-linked. Voltage-dependent calcium channels are multisubunit complexes, consisting of alpha-1 (CACNA1), alpha-2 (CACNA2D), beta (CACNB) and delta (CACNA2D) subunits in a 1:1:1:1 ratio. In terms of processing, may be proteolytically processed into subunits alpha-2-2 and delta-2 that are disulfide-linked. It is however unclear whether such cleavage really takes place in vivo and has a functional role. As to expression, predominantly present in cerebellar cortex. Present in various lung tumor cell lines, while it is absent in normal lung (at protein level). Highly expressed in heart, lung, testis, pancreas and skeletal muscle. Also expressed in kidney, liver, placenta and brain.

The protein resides in the membrane. Functionally, the alpha-2/delta subunit of voltage-dependent calcium channels regulates calcium current density and activation/inactivation kinetics of the calcium channel. Acts as a regulatory subunit for P/Q-type calcium channel (CACNA1A), N-type (CACNA1B), L-type (CACNA1C OR CACNA1D) and possibly T-type (CACNA1G). Overexpression induces apoptosis. The polypeptide is Voltage-dependent calcium channel subunit alpha-2/delta-2 (CACNA2D2) (Homo sapiens (Human)).